The sequence spans 282 residues: Cholesterol 25-hydroxylase-like protein 1, member 1 (282 aa).

An N-linked (GlcNAc...) asparagine glycan is attached at Asn-3. 3 helical membrane-spanning segments follow: residues 40 to 60 (FFPV…FAVL), 85 to 107 (MLRT…VLIT), and 127 to 147 (FSGG…WHMV). The Fatty acid hydroxylase domain maps to 133–265 (ALLVFDTQYF…FSHWDKIFGT (133 aa)). Residues 144–148 (WHMVH) carry the Histidine box-1 motif. The short motif at 159–163 (HAIHH) is the Histidine box-2 element. A Histidine box-3 motif is present at residues 240–246 (AHDMHHQ).

The protein belongs to the sterol desaturase family. Fe cation serves as cofactor.

It localises to the endoplasmic reticulum membrane. Its function is as follows. May catalyze the formation of 25-hydroxycholesterol from cholesterol. This chain is Cholesterol 25-hydroxylase-like protein 1, member 1 (ch25hl1.1), found in Danio rerio (Zebrafish).